The following is a 169-amino-acid chain: MSAPPALQIREANAHLAAVHRRAAELEARLDAAERTVHAQAERLALHDQQLRAALDELGRAKDREIATLQEQLMTSEATVHSLQATVHQRDELIRQLQPRAELLQDICRRRPPLAGLLDALAEAERLGPLPASDPGHPPPGGPGPPLDNSTGEEADRDHLQPAVFGTTV.

The stretch at 7–89 (LQIREANAHL…VHSLQATVHQ (83 aa)) forms a coiled coil. The segment covering 126-135 (RLGPLPASDP) has biased composition (low complexity). The interval 126 to 169 (RLGPLPASDPGHPPPGGPGPPLDNSTGEEADRDHLQPAVFGTTV) is disordered. Pro residues predominate over residues 136 to 146 (GHPPPGGPGPP).

The protein localises to the cytoplasm. This chain is Vimentin-type intermediate filament-associated coiled-coil protein (VMAC), found in Homo sapiens (Human).